A 392-amino-acid polypeptide reads, in one-letter code: Tyrosine--tRNA ligase (392 aa).

The 'HIGH' region signature appears at 41 to 50; that stretch reads PTAPDLHLGH. A 'KMSKS' region motif is present at residues 225–229; it reads KMSKS. An ATP-binding site is contributed by K228. In terms of domain architecture, S4 RNA-binding spans 330-390; it reads LRAVDFLVKI…VGKKKFYRVV (61 aa).

The protein belongs to the class-I aminoacyl-tRNA synthetase family. TyrS type 2 subfamily. In terms of assembly, homodimer.

Its subcellular location is the cytoplasm. The catalysed reaction is tRNA(Tyr) + L-tyrosine + ATP = L-tyrosyl-tRNA(Tyr) + AMP + diphosphate + H(+). Functionally, catalyzes the attachment of tyrosine to tRNA(Tyr) in a two-step reaction: tyrosine is first activated by ATP to form Tyr-AMP and then transferred to the acceptor end of tRNA(Tyr). The polypeptide is Tyrosine--tRNA ligase (Aquifex aeolicus (strain VF5)).